A 380-amino-acid chain; its full sequence is Chorismate synthase (380 aa).

Arg47 provides a ligand contact to NADP(+). FMN contacts are provided by residues 124 to 126 (RSS), Gly288, 303 to 307 (KPTST), and Arg329.

Belongs to the chorismate synthase family. Homotetramer. Requires FMNH2 as cofactor.

The enzyme catalyses 5-O-(1-carboxyvinyl)-3-phosphoshikimate = chorismate + phosphate. It participates in metabolic intermediate biosynthesis; chorismate biosynthesis; chorismate from D-erythrose 4-phosphate and phosphoenolpyruvate: step 7/7. Catalyzes the anti-1,4-elimination of the C-3 phosphate and the C-6 proR hydrogen from 5-enolpyruvylshikimate-3-phosphate (EPSP) to yield chorismate, which is the branch point compound that serves as the starting substrate for the three terminal pathways of aromatic amino acid biosynthesis. This reaction introduces a second double bond into the aromatic ring system. The chain is Chorismate synthase from Leptospira borgpetersenii serovar Hardjo-bovis (strain JB197).